We begin with the raw amino-acid sequence, 695 residues long: Tail-specific protease (695 aa).

A signal peptide spans 1 to 29; the sequence is MVMKFKMSKNVICYTWLSVCLSSAIPAFA. The PDZ domain occupies 256–316; the sequence is IGTTLQSEDD…RLEDLVEKIK (61 aa). Residues Ser-459, Asp-470, and Lys-484 each act as charge relay system in the active site.

Belongs to the peptidase S41A family.

Its subcellular location is the cell inner membrane. It carries out the reaction The enzyme shows specific recognition of a C-terminal tripeptide, Xaa-Yaa-Zaa, in which Xaa is preferably Ala or Leu, Yaa is preferably Ala or Tyr, and Zaa is preferably Ala, but then cleaves at a variable distance from the C-terminus. A typical cleavage is -Ala-Ala-|-Arg-Ala-Ala-Lys-Glu-Asn-Tyr-Ala-Leu-Ala-Ala.. Involved in the cleavage of a C-terminal peptide of 11 residues from the precursor form of penicillin-binding protein 3 (PBP3). May be involved in protection of the bacterium from thermal and osmotic stresses. The polypeptide is Tail-specific protease (prc) (Haemophilus influenzae (strain ATCC 51907 / DSM 11121 / KW20 / Rd)).